The following is a 315-amino-acid chain: Lipoyl synthase (315 aa).

Positions 63, 68, 74, 89, 93, 96, and 303 each coordinate [4Fe-4S] cluster. The 218-residue stretch at 75–292 (FSKGTATFMI…EEKAYEMGFV (218 aa)) folds into the Radical SAM core domain.

It belongs to the radical SAM superfamily. Lipoyl synthase family. [4Fe-4S] cluster serves as cofactor.

The protein localises to the cytoplasm. The enzyme catalyses [[Fe-S] cluster scaffold protein carrying a second [4Fe-4S](2+) cluster] + N(6)-octanoyl-L-lysyl-[protein] + 2 oxidized [2Fe-2S]-[ferredoxin] + 2 S-adenosyl-L-methionine + 4 H(+) = [[Fe-S] cluster scaffold protein] + N(6)-[(R)-dihydrolipoyl]-L-lysyl-[protein] + 4 Fe(3+) + 2 hydrogen sulfide + 2 5'-deoxyadenosine + 2 L-methionine + 2 reduced [2Fe-2S]-[ferredoxin]. It functions in the pathway protein modification; protein lipoylation via endogenous pathway; protein N(6)-(lipoyl)lysine from octanoyl-[acyl-carrier-protein]: step 2/2. In terms of biological role, catalyzes the radical-mediated insertion of two sulfur atoms into the C-6 and C-8 positions of the octanoyl moiety bound to the lipoyl domains of lipoate-dependent enzymes, thereby converting the octanoylated domains into lipoylated derivatives. The chain is Lipoyl synthase from Chromobacterium violaceum (strain ATCC 12472 / DSM 30191 / JCM 1249 / CCUG 213 / NBRC 12614 / NCIMB 9131 / NCTC 9757 / MK).